Here is a 245-residue protein sequence, read N- to C-terminus: Octanoyltransferase (245 aa).

The BPL/LPL catalytic domain maps to 54 to 238 (GEATELVWLL…AFENIFGETR (185 aa)). Substrate is bound by residues 92 to 99 (RGGQLTYH), 167 to 169 (AIG), and 180 to 182 (GIA). Cysteine 198 (acyl-thioester intermediate) is an active-site residue.

The protein belongs to the LipB family.

It localises to the cytoplasm. The enzyme catalyses octanoyl-[ACP] + L-lysyl-[protein] = N(6)-octanoyl-L-lysyl-[protein] + holo-[ACP] + H(+). Its pathway is protein modification; protein lipoylation via endogenous pathway; protein N(6)-(lipoyl)lysine from octanoyl-[acyl-carrier-protein]: step 1/2. In terms of biological role, catalyzes the transfer of endogenously produced octanoic acid from octanoyl-acyl-carrier-protein onto the lipoyl domains of lipoate-dependent enzymes. Lipoyl-ACP can also act as a substrate although octanoyl-ACP is likely to be the physiological substrate. The polypeptide is Octanoyltransferase (Rhodopseudomonas palustris (strain ATCC BAA-98 / CGA009)).